A 133-amino-acid chain; its full sequence is Large ribosomal subunit protein uL11 (133 aa).

The protein belongs to the universal ribosomal protein uL11 family. Part of the ribosomal stalk of the 50S ribosomal subunit. Interacts with L10 and the large rRNA to form the base of the stalk. L10 forms an elongated spine to which 2 L12 dimers bind in a sequential fashion forming a pentameric L10(L12)2(L12)2 complex. One or more lysine residues are methylated.

Functionally, forms part of the ribosomal stalk which helps the ribosome interact with GTP-bound translation factors. The polypeptide is Large ribosomal subunit protein uL11 (Geobacillus stearothermophilus (Bacillus stearothermophilus)).